The chain runs to 207 residues: Thaumatin-like protein 1 (207 aa).

8 cysteine pairs are disulfide-bonded: C9–C202, C50–C60, C65–C71, C117–C191, C122–C174, C130–C140, C144–C153, and C154–C161.

This sequence belongs to the thaumatin family. Monomer. Post-translationally, not glycosylated.

The protein resides in the secreted. Acidic thaumatin-like protein. Exhibits weak beta-1,3-glucanase activity with laminarin as substrate. The sequence is that of Thaumatin-like protein 1 (TLP1) from Manilkara zapota (Sapodilla plum).